Reading from the N-terminus, the 179-residue chain is Replication restart protein DnaT (179 aa).

A compositionally biased stretch (polar residues) spans 151–168 (SRSSNGGMPQRDINSVSE). Positions 151–179 (SRSSNGGMPQRDINSVSEPDNHIPPGFRG) are disordered.

Belongs to the DnaT family. As to quaternary structure, homooligomerizes. Interacts with PriB. Component of the replication restart primosome. Primosome assembly occurs via a 'hand-off' mechanism. PriA binds to replication forks, subsequently PriB then DnaT bind; DnaT then displaces ssDNA to generate the helicase loading substrate.

Its function is as follows. Involved in the restart of stalled replication forks, which reloads the replicative helicase on sites other than the origin of replication. Can function in multiple replication restart pathways. Displaces ssDNA from a PriB-ssDNA complex. Probably forms a spiral filament on ssDNA. The sequence is that of Replication restart protein DnaT from Salmonella schwarzengrund (strain CVM19633).